A 454-amino-acid chain; its full sequence is tRNA modification GTPase MnmE (454 aa).

(6S)-5-formyl-5,6,7,8-tetrahydrofolate contacts are provided by R23, E80, and K120. The 162-residue stretch at 216 to 377 (GMKVVIAGRP…LRNHLKQSMG (162 aa)) folds into the TrmE-type G domain. N226 is a K(+) binding site. GTP-binding positions include 226-231 (NAGKSS), 245-251 (TDIAGTT), 270-273 (DTAG), 335-338 (NKAD), and 358-360 (SAR). S230 contacts Mg(2+). K(+) is bound by residues T245, I247, and T250. Mg(2+) is bound at residue T251. A (6S)-5-formyl-5,6,7,8-tetrahydrofolate-binding site is contributed by K454.

It belongs to the TRAFAC class TrmE-Era-EngA-EngB-Septin-like GTPase superfamily. TrmE GTPase family. In terms of assembly, homodimer. Heterotetramer of two MnmE and two MnmG subunits. It depends on K(+) as a cofactor.

The protein resides in the cytoplasm. Its function is as follows. Exhibits a very high intrinsic GTPase hydrolysis rate. Involved in the addition of a carboxymethylaminomethyl (cmnm) group at the wobble position (U34) of certain tRNAs, forming tRNA-cmnm(5)s(2)U34. This chain is tRNA modification GTPase MnmE, found in Salmonella choleraesuis (strain SC-B67).